The primary structure comprises 175 residues: Type-2 ice-structuring protein (175 aa).

A signal peptide spans methionine 1–alanine 16. Residues alanine 17–lysine 33 constitute a propeptide that is removed on maturation. The C-type lectin domain maps to threonine 36–alanine 163. Intrachain disulfides connect cysteine 38/cysteine 49, cysteine 66/cysteine 159, cysteine 103/cysteine 134, cysteine 123/cysteine 145, and cysteine 135/cysteine 151.

It is found in the secreted. Its function is as follows. Antifreeze proteins lower the blood freezing point. In Osmerus mordax (Rainbow smelt), this protein is Type-2 ice-structuring protein.